Reading from the N-terminus, the 673-residue chain is Protein VirD3 (673 aa).

Disordered stretches follow at residues 36-73 (VAGE…GRLG), 171-216 (SPVN…GTSV), 229-409 (ERDT…LRSS), 478-497 (RLNG…LEDF), 520-552 (EKGK…VTPL), and 585-673 (DSSR…GCGR). 4 stretches are compositionally biased toward polar residues: residues 171 to 183 (SPVN…SNWQ), 193 to 216 (VQPS…GTSV), 234 to 246 (SETT…TISS), and 268 to 277 (QSLSVTVTTP). Over residues 278–287 (NSNAEASSHS) the composition is skewed to low complexity. Basic and acidic residues predominate over residues 288-303 (AHTETLDDVSSDRSSE). 2 stretches are compositionally biased toward basic and acidic residues: residues 520–534 (EKGK…DTRF) and 638–673 (AAEH…GCGR).

This chain is Protein VirD3 (virD3), found in Agrobacterium fabrum (strain C58 / ATCC 33970) (Agrobacterium tumefaciens (strain C58)).